A 282-amino-acid chain; its full sequence is Probable phosphatase C1620.13 (282 aa).

H61 serves as the catalytic Tele-phosphohistidine intermediate. E135 (proton donor/acceptor) is an active-site residue.

Belongs to the phosphoglycerate mutase family. BPG-dependent PGAM subfamily.

It is found in the nucleus. The polypeptide is Probable phosphatase C1620.13 (Schizosaccharomyces pombe (strain 972 / ATCC 24843) (Fission yeast)).